Here is a 990-residue protein sequence, read N- to C-terminus: DNA ligase 4 (990 aa).

The segment at 57–84 (TQKKGRQPPGPRRKAGPHGHSNLSPHEA) is disordered. Residues glutamate 324, lysine 326, leucine 327, arginine 331, glutamate 394, phenylalanine 436, glutamate 496, lysine 501, lysine 518, and lysine 520 each coordinate ATP. Lysine 326 acts as the N6-AMP-lysine intermediate in catalysis. Mg(2+) is bound at residue glutamate 394. A Mg(2+)-binding site is contributed by glutamate 496. 2 BRCT domains span residues 728–821 (PQSK…LPYL) and 900–989 (YMFS…RYQW).

Belongs to the ATP-dependent DNA ligase family. Requires Mg(2+) as cofactor.

The protein resides in the nucleus. It catalyses the reaction ATP + (deoxyribonucleotide)n-3'-hydroxyl + 5'-phospho-(deoxyribonucleotide)m = (deoxyribonucleotide)n+m + AMP + diphosphate.. Functionally, DNA ligase involved in DNA non-homologous end joining (NHEJ); required for double-strand break (DSB) repair. In Phaeosphaeria nodorum (strain SN15 / ATCC MYA-4574 / FGSC 10173) (Glume blotch fungus), this protein is DNA ligase 4 (LIG4).